Consider the following 553-residue polypeptide: Transcription factor GAMYB (553 aa).

Basic and acidic residues predominate over residues 1-17 (MYRVKSESDCEMIHQEQ). The segment at 1-45 (MYRVKSESDCEMIHQEQMDSPVADDGSSGGSPHRGGGPPLKKGPW) is disordered. Positions 27–38 (SSGGSPHRGGGP) are enriched in gly residues. HTH myb-type domains are found at residues 37 to 89 (GPPL…ANHL) and 90 to 144 (RPNL…KRCQ). DNA-binding regions (H-T-H motif) lie at residues 65-89 (WNAV…ANHL) and 117-140 (WARM…NTRI). The segment at 464–488 (PAQSTSMGSGEQVMGPKYEPGDTSP) is disordered.

It localises to the nucleus. Its function is as follows. Transcriptional activator of gibberellin-dependent alpha-amylase expression in aleurone cells. Involved in pollen and floral organs development. May bind to the 5'-TAACAAA-3' box of alpha-amylase promoter. This Oryza sativa subsp. indica (Rice) protein is Transcription factor GAMYB (GAM1).